The sequence spans 249 residues: Phosphomannomutase (249 aa).

The Nucleophile role is filled by Asp-15. Residues Asp-15 and Asp-17 each contribute to the Mg(2+) site. Asp-17 functions as the Proton donor/acceptor in the catalytic mechanism. Positions 24, 126, 137, 144, 182, and 184 each coordinate alpha-D-mannose 1-phosphate. Positions 210, 222, and 227 each coordinate Mg(2+).

It belongs to the eukaryotic PMM family. As to quaternary structure, homodimer. Mg(2+) serves as cofactor. As to expression, expressed in roots, leaves, flag leaves and immature spikes.

It localises to the cytoplasm. It carries out the reaction alpha-D-mannose 1-phosphate = D-mannose 6-phosphate. It participates in nucleotide-sugar biosynthesis; GDP-alpha-D-mannose biosynthesis; alpha-D-mannose 1-phosphate from D-fructose 6-phosphate: step 2/2. Its function is as follows. Catalyzes the interconversion of mannose-6-phosphate to mannose-1-phosphate, the precursor for the synthesis of GDP-mannose. GDP-mannose is an essential sugar nucleotide for the synthesis of D-mannose-containing cell wall polysaccharides (galactomannans and glucomannans), glycolipids, glycoproteins and the antioxidant L-ascorbate. Can complement the yeast temperature-sensitive mutant sec53-6. The polypeptide is Phosphomannomutase (Triticum aestivum (Wheat)).